Reading from the N-terminus, the 460-residue chain is Ammonium transporter Rh type B-B (460 aa).

Over 1 to 10 (MTSYSTNMRI) the chain is Cytoplasmic. Residues 11-31 (KLPLFCLLLQFITIILFAVFV) form a helical membrane-spanning segment. Residues 32–62 (RYDHESDARGWHEELNNHSSSNADNDFYYRY) lie on the Extracellular side of the membrane. Asn48 carries an N-linked (GlcNAc...) asparagine glycan. A helical membrane pass occupies residues 63-83 (PSFQDVHVMIFIGFGFLMTFL). Over 84-87 (KRYG) the chain is Cytoplasmic. A helical membrane pass occupies residues 88 to 108 (FSSVAFNFLIAAFGLQWSTLI). At 109–125 (QGFFHGFHDGKIHVGIE) the chain is on the extracellular side. Residues 126–146 (SMINADFCTGAVLISFGAVLG) form a helical membrane-spanning segment. Over 147–150 (KTSP) the chain is Cytoplasmic. The chain crosses the membrane as a helical span at residues 151 to 171 (VQLIIMTLVEVTLFGINEYII). At 172–179 (LNIVGAKD) the chain is on the extracellular side. A helical membrane pass occupies residues 180-202 (AGGSMTIHTFGAYFGLIVSRVLY). Residues 203-220 (REDLEKSRQREGSVYHSD) lie on the Cytoplasmic side of the membrane. The chain crosses the membrane as a helical span at residues 221–241 (LFAMIGTIYLWMFWPSFNSAV). The Extracellular segment spans residues 242–252 (TAHGDDQHRTV). A helical membrane pass occupies residues 253-273 (MNTYYSLAACTLATFGFSALL). The Cytoplasmic segment spans residues 274-283 (NGEGKLDMVH). Residues 284–304 (IQNAALAGGVAVGTSGEMMLT) traverse the membrane as a helical segment. Position 305 (Pro305) is a topological domain, extracellular. The helical transmembrane segment at 306–326 (FGAMIAGTLAGMISVLGYKYL) threads the bilayer. Residues 327 to 347 (TPVLDSKLKIQDTCGVHNLHG) lie on the Cytoplasmic side of the membrane. The helical transmembrane segment at 348-368 (MPGILGAIIGAIVALFATADI) threads the bilayer. Topologically, residues 369–394 (YGDGMGDVFPLISDGSRTAKQQSLYQ) are extracellular. Residues 395–415 (FLALLVALGFAIIGGTVVGFI) form a helical membrane-spanning segment. At 416-460 (LKLPIFGTPSDAECFEDAIYWEVPGGEGHQQLTVVINNEDPDTQA) the chain is on the cytoplasmic side.

This sequence belongs to the ammonium transporter (TC 2.A.49) family. Rh subfamily.

The protein resides in the basolateral cell membrane. It is found in the cytoplasmic vesicle membrane. Its function is as follows. Functions as a specific ammonium transporter. This Xenopus laevis (African clawed frog) protein is Ammonium transporter Rh type B-B (rhbg-b).